We begin with the raw amino-acid sequence, 134 residues long: Putative pre-16S rRNA nuclease (134 aa).

It belongs to the YqgF nuclease family.

The protein resides in the cytoplasm. Functionally, could be a nuclease involved in processing of the 5'-end of pre-16S rRNA. The sequence is that of Putative pre-16S rRNA nuclease from Helicobacter pylori (strain ATCC 700392 / 26695) (Campylobacter pylori).